The sequence spans 541 residues: ATP synthase subunit beta (541 aa).

The segment at 1 to 65 (MAKAVTSSKG…TPVKKEERAK (65 aa)) is disordered. Composition is skewed to basic and acidic residues over residues 25 to 36 (VKKDASKSKDAS) and 52 to 65 (AAKD…ERAK). Position 214–221 (214–221 (GGAGVGKT)) interacts with ATP.

The protein belongs to the ATPase alpha/beta chains family. In terms of assembly, F-type ATPases have 2 components, CF(1) - the catalytic core - and CF(0) - the membrane proton channel. CF(1) has five subunits: alpha(3), beta(3), gamma(1), delta(1), epsilon(1). CF(0) has three main subunits: a(1), b(2) and c(9-12). The alpha and beta chains form an alternating ring which encloses part of the gamma chain. CF(1) is attached to CF(0) by a central stalk formed by the gamma and epsilon chains, while a peripheral stalk is formed by the delta and b chains.

The protein localises to the cell inner membrane. It carries out the reaction ATP + H2O + 4 H(+)(in) = ADP + phosphate + 5 H(+)(out). Its function is as follows. Produces ATP from ADP in the presence of a proton gradient across the membrane. The catalytic sites are hosted primarily by the beta subunits. This chain is ATP synthase subunit beta, found in Bartonella tribocorum (strain CIP 105476 / IBS 506).